Consider the following 131-residue polypeptide: Arsenate reductase 2 (131 aa).

Residues cysteine 10, cysteine 82, and cysteine 89 each act as nucleophile in the active site. Cystine bridges form between cysteine 10/cysteine 82 and cysteine 82/cysteine 89.

This sequence belongs to the low molecular weight phosphotyrosine protein phosphatase family. Thioredoxin-coupled ArsC subfamily.

It is found in the cytoplasm. It catalyses the reaction arsenate + [thioredoxin]-dithiol + H(+) = arsenite + [thioredoxin]-disulfide + H2O. Functionally, catalyzes the reduction of arsenate [As(V)] to arsenite [As(III)]. The sequence is that of Arsenate reductase 2 from Staphylococcus haemolyticus (strain JCSC1435).